A 245-amino-acid chain; its full sequence is DNA polymerase sliding clamp 2 (245 aa).

Belongs to the PCNA family. Homotrimer. The subunits circularize to form a toroid; DNA passes through its center. Replication factor C (RFC) is required to load the toroid on the DNA.

Functionally, sliding clamp subunit that acts as a moving platform for DNA processing. Responsible for tethering the catalytic subunit of DNA polymerase and other proteins to DNA during high-speed replication. The sequence is that of DNA polymerase sliding clamp 2 from Sulfolobus acidocaldarius (strain ATCC 33909 / DSM 639 / JCM 8929 / NBRC 15157 / NCIMB 11770).